The chain runs to 190 residues: Interferon alpha-11 (190 aa).

Residues 1–23 form the signal peptide; that stretch reads MARLCAFLMILIVMSYWSTCSLG. Disulfide bonds link Cys24-Cys122 and Cys52-Cys162. Asn101 carries an N-linked (GlcNAc...) asparagine glycan.

This sequence belongs to the alpha/beta interferon family. In terms of processing, N-glycosylated.

Its subcellular location is the secreted. Functionally, has antiviral and antiproliferative activities. Produced by macrophages and stimulates the production of two enzymes: a protein kinase and an oligoadenylate synthetase. During viral infection, mediates antiviral effect, either directly by inducing interferon-stimulated genes, either indirectly through stimulation of natural killer cells enabling them to control viral replication. In Mus musculus (Mouse), this protein is Interferon alpha-11 (Ifna11).